A 415-amino-acid chain; its full sequence is Gamma-glutamyl phosphate reductase (415 aa).

This sequence belongs to the gamma-glutamyl phosphate reductase family.

The protein localises to the cytoplasm. It carries out the reaction L-glutamate 5-semialdehyde + phosphate + NADP(+) = L-glutamyl 5-phosphate + NADPH + H(+). Its pathway is amino-acid biosynthesis; L-proline biosynthesis; L-glutamate 5-semialdehyde from L-glutamate: step 2/2. Functionally, catalyzes the NADPH-dependent reduction of L-glutamate 5-phosphate into L-glutamate 5-semialdehyde and phosphate. The product spontaneously undergoes cyclization to form 1-pyrroline-5-carboxylate. This chain is Gamma-glutamyl phosphate reductase, found in Listeria monocytogenes serovar 1/2a (strain ATCC BAA-679 / EGD-e).